Consider the following 90-residue polypeptide: Probable Fe(2+)-trafficking protein (90 aa).

The protein belongs to the Fe(2+)-trafficking protein family.

Its function is as follows. Could be a mediator in iron transactions between iron acquisition and iron-requiring processes, such as synthesis and/or repair of Fe-S clusters in biosynthetic enzymes. In Cupriavidus taiwanensis (strain DSM 17343 / BCRC 17206 / CCUG 44338 / CIP 107171 / LMG 19424 / R1) (Ralstonia taiwanensis (strain LMG 19424)), this protein is Probable Fe(2+)-trafficking protein.